A 567-amino-acid chain; its full sequence is Hydroxylamine reductase 2 (567 aa).

[4Fe-4S] cluster is bound by residues Cys-5, Cys-8, Cys-17, and Cys-23. Hybrid [4Fe-2O-2S] cluster contacts are provided by His-262, Glu-286, Cys-330, Cys-421, Cys-449, Cys-474, Glu-509, and Lys-511. The residue at position 421 (Cys-421) is a Cysteine persulfide.

The protein belongs to the HCP family. Requires [4Fe-4S] cluster as cofactor. It depends on hybrid [4Fe-2O-2S] cluster as a cofactor.

The protein resides in the cytoplasm. The enzyme catalyses A + NH4(+) + H2O = hydroxylamine + AH2 + H(+). Its function is as follows. Catalyzes the reduction of hydroxylamine to form NH(3) and H(2)O. The protein is Hydroxylamine reductase 2 of Clostridium acetobutylicum (strain ATCC 824 / DSM 792 / JCM 1419 / IAM 19013 / LMG 5710 / NBRC 13948 / NRRL B-527 / VKM B-1787 / 2291 / W).